A 130-amino-acid polypeptide reads, in one-letter code: MAAKFEVGSVYTGKVTGLQAYGAFVALDEETQGLVHISEVTHGFVKDINEHLSVGDEVQVKVLAVDEEKGKISLSIRATQAAPEKKESKPRKPKAAQVSEEASTPQGFNTLKDKLEEWIEMSNRKDLIKK.

The 70-residue stretch at glycine 8–arginine 77 folds into the S1 motif domain. A disordered region spans residues isoleucine 76 to asparagine 109. Residues glutamate 100–asparagine 109 show a composition bias toward polar residues.

In terms of assembly, found in association with the 30S subunit of the ribosome.

The protein localises to the cytoplasm. The polypeptide is General stress protein 13 (yugI) (Bacillus subtilis (strain 168)).